The following is a 358-amino-acid chain: tRNA-specific 2-thiouridylase MnmA (358 aa).

ATP-binding positions include 22–29 (LVSGGIDS) and Phe-48. Cys-105 serves as the catalytic Nucleophile. A disulfide bond links Cys-105 and Cys-201. An ATP-binding site is contributed by Gly-129. The tract at residues 151-153 (KEQ) is interaction with tRNA. Residue Cys-201 is the Cysteine persulfide intermediate of the active site. Residues 306–307 (RY) form an interaction with tRNA region.

This sequence belongs to the MnmA/TRMU family.

It localises to the cytoplasm. It carries out the reaction S-sulfanyl-L-cysteinyl-[protein] + uridine(34) in tRNA + AH2 + ATP = 2-thiouridine(34) in tRNA + L-cysteinyl-[protein] + A + AMP + diphosphate + H(+). Catalyzes the 2-thiolation of uridine at the wobble position (U34) of tRNA, leading to the formation of s(2)U34. The protein is tRNA-specific 2-thiouridylase MnmA of Desulfosudis oleivorans (strain DSM 6200 / JCM 39069 / Hxd3) (Desulfococcus oleovorans).